A 220-amino-acid polypeptide reads, in one-letter code: Nitrile hydratase subunit beta (220 aa).

The protein belongs to the nitrile hydratase subunit beta family. Heterodimer of an alpha and a beta chain.

The enzyme catalyses an aliphatic primary amide = an aliphatic nitrile + H2O. NHase catalyzes the hydration of various nitrile compounds to the corresponding amides. In Pseudomonas chlororaphis (Pseudomonas aureofaciens), this protein is Nitrile hydratase subunit beta (nthB).